We begin with the raw amino-acid sequence, 516 residues long: tRNA-guanine(15) transglycosylase (516 aa).

The active-site Nucleophile is the aspartate 93. Substrate-binding residues include aspartate 128 and alanine 196. Residues cysteine 279, cysteine 281, and cysteine 284 each contribute to the Zn(2+) site. The span at 488-502 (LSAVSERLGDEASVG) shows a compositional bias: low complexity. Residues 488 to 516 (LSAVSERLGDEASVGGDDGDDGGSASSAE) are disordered.

Belongs to the archaeosine tRNA-ribosyltransferase family. It depends on Zn(2+) as a cofactor.

The catalysed reaction is guanosine(15) in tRNA + 7-cyano-7-deazaguanine = 7-cyano-7-carbaguanosine(15) in tRNA + guanine. It participates in tRNA modification; archaeosine-tRNA biosynthesis. Exchanges the guanine residue with 7-cyano-7-deazaguanine (preQ0) at position 15 in the dihydrouridine loop (D-loop) of archaeal tRNAs. This is tRNA-guanine(15) transglycosylase from Haloferax volcanii (strain ATCC 29605 / DSM 3757 / JCM 8879 / NBRC 14742 / NCIMB 2012 / VKM B-1768 / DS2) (Halobacterium volcanii).